The chain runs to 164 residues: 17.8 kDa class II heat shock protein (164 aa).

Residues 48-164 (DARAMAATPA…KPKTIEVKVA (117 aa)) form the sHSP domain.

This sequence belongs to the small heat shock protein (HSP20) family.

The protein resides in the cytoplasm. The sequence is that of 17.8 kDa class II heat shock protein from Zea mays (Maize).